Consider the following 117-residue polypeptide: Large ribosomal subunit protein bL20 (117 aa).

It belongs to the bacterial ribosomal protein bL20 family.

Functionally, binds directly to 23S ribosomal RNA and is necessary for the in vitro assembly process of the 50S ribosomal subunit. It is not involved in the protein synthesizing functions of that subunit. In Neorickettsia sennetsu (strain ATCC VR-367 / Miyayama) (Ehrlichia sennetsu), this protein is Large ribosomal subunit protein bL20.